A 325-amino-acid polypeptide reads, in one-letter code: Probable WRKY transcription factor 11 (325 aa).

The WRKY DNA-binding region spans 240–306; it reads KIADIPPDEY…YEGEHRHNQS (67 aa).

Belongs to the WRKY group II-d family. In young, mature and senescent leaves.

The protein resides in the nucleus. Transcription factor. Interacts specifically with the W box (5'-(T)TGAC[CT]-3'), a frequently occurring elicitor-responsive cis-acting element. Regulates rhizobacterium B.cereus AR156-induced systemic resistance (ISR) to P.syringae pv. tomato DC3000, probably by activating the jasmonic acid (JA)- signaling pathway. This Arabidopsis thaliana (Mouse-ear cress) protein is Probable WRKY transcription factor 11 (WRKY11).